Consider the following 464-residue polypeptide: Tyrosine aminotransferase (464 aa).

N6-(pyridoxal phosphate)lysine is present on lysine 284.

The protein belongs to the class-I pyridoxal-phosphate-dependent aminotransferase family. As to quaternary structure, homodimer. The cofactor is pyridoxal 5'-phosphate. Expressed in the muscle. Expressed in the hypodermis and intestine.

It carries out the reaction L-tyrosine + 2-oxoglutarate = 3-(4-hydroxyphenyl)pyruvate + L-glutamate. The enzyme catalyses 3-hydroxy-L-phenylalanine + 2-oxoglutarate = 3-(3-hydroxyphenyl)pyruvate + L-glutamate. It functions in the pathway amino-acid degradation; L-phenylalanine degradation; acetoacetate and fumarate from L-phenylalanine: step 2/6. Transaminase involved in tyrosine breakdown. Converts tyrosine to p-hydroxyphenylpyruvate. Has no transaminase activity towards phenylalanine. Plays protective role against oxidative stress, metabolizing meta-tyrosine and negatively regulating its accumulation. Plays a role in modulating the daf-2/insulin receptor-like transduction pathway through regulating tyrosine levels. Negatively regulates dauer formation. Plays a role in longevity. This Caenorhabditis elegans protein is Tyrosine aminotransferase.